A 157-amino-acid polypeptide reads, in one-letter code: 17.8 kDa class I heat shock protein (157 aa).

The region spanning E43–G157 is the sHSP domain.

Belongs to the small heat shock protein (HSP20) family. In terms of assembly, forms oligomeric structures.

Its subcellular location is the cytoplasm. The protein is 17.8 kDa class I heat shock protein of Daucus carota (Wild carrot).